Reading from the N-terminus, the 315-residue chain is MTIDSGFNHITVLLDEAVEALAVRADGCYLDGTFGRGGHSRLILSQLGSDGKLLGFDKDPQAIATGQALAAEDGRFVVVQRSFAELGAEVAERGMAGKVAGVLLDLGVSSPQLDDPERGFSFMNDGPLDMRMDPTRGVSAAQFIATAPVEEIARVFKEYGEERFAGRMARAVVERREIQPFERTADLAEVLKVANPAWEKGKNPATRAFQGLRIHVNNELGDLEAGLEAALEALEVGGRLVVISFHSLEDRIVKLFMRRLVKGESDNLPRNLPVRFEAFVPKIKIHGKAQFASEAELKANPRSRSAVMRVAEKLR.

S-adenosyl-L-methionine contacts are provided by residues 37–39 (GGH), aspartate 57, phenylalanine 83, aspartate 105, and glutamine 112.

Belongs to the methyltransferase superfamily. RsmH family.

The protein localises to the cytoplasm. It catalyses the reaction cytidine(1402) in 16S rRNA + S-adenosyl-L-methionine = N(4)-methylcytidine(1402) in 16S rRNA + S-adenosyl-L-homocysteine + H(+). In terms of biological role, specifically methylates the N4 position of cytidine in position 1402 (C1402) of 16S rRNA. The protein is Ribosomal RNA small subunit methyltransferase H of Pseudomonas fluorescens (strain SBW25).